A 447-amino-acid chain; its full sequence is Tubulin beta-5 chain (447 aa).

GTP-binding residues include Q11, E69, S138, G142, T143, G144, N204, and N226. E69 serves as a coordination point for Mg(2+). A disordered region spans residues E421 to A447. Over residues T429 to A447 the composition is skewed to acidic residues.

Belongs to the tubulin family. As to quaternary structure, dimer of alpha and beta chains. A typical microtubule is a hollow water-filled tube with an outer diameter of 25 nm and an inner diameter of 15 nM. Alpha-beta heterodimers associate head-to-tail to form protofilaments running lengthwise along the microtubule wall with the beta-tubulin subunit facing the microtubule plus end conferring a structural polarity. Microtubules usually have 13 protofilaments but different protofilament numbers can be found in some organisms and specialized cells. The cofactor is Mg(2+). Expressed in roots, leaf sheaths, and suspension cultured cells.

Its subcellular location is the cytoplasm. The protein localises to the cytoskeleton. Tubulin is the major constituent of microtubules, a cylinder consisting of laterally associated linear protofilaments composed of alpha- and beta-tubulin heterodimers. Microtubules grow by the addition of GTP-tubulin dimers to the microtubule end, where a stabilizing cap forms. Below the cap, tubulin dimers are in GDP-bound state, owing to GTPase activity of alpha-tubulin. The polypeptide is Tubulin beta-5 chain (TUBB5) (Oryza sativa subsp. japonica (Rice)).